The primary structure comprises 183 residues: Gamma-crystallin N (183 aa).

Beta/gamma crystallin 'Greek key' domains follow at residues 6–46 (GKII…RVET), 47–89 (GAWI…KPVR), 95–136 (YRLE…KVYG), and 138–180 (GAWV…RRVV).

The protein belongs to the beta/gamma-crystallin family. Monomer.

Functionally, crystallins are the dominant structural components of the vertebrate eye lens. This is Gamma-crystallin N (crygn) from Xenopus tropicalis (Western clawed frog).